Here is a 497-residue protein sequence, read N- to C-terminus: Angiopoietin-1 (497 aa).

The N-terminal stretch at 1–19 (MTVFLSFAFLAAILTHIGC) is a signal peptide. N-linked (GlcNAc...) asparagine glycans are attached at residues Asn92, Asn122, Asn154, Asn243, and Asn294. The stretch at 158-256 (RLEIQLLENS…LQKQQLELMD (99 aa)) forms a coiled coil. Residues 276 to 496 (KEEEKPFRDC…STTMMIRPLD (221 aa)) form the Fibrinogen C-terminal domain. 2 cysteine pairs are disulfide-bonded: Cys285–Cys314 and Cys438–Cys451.

Homooligomer. Interacts with TEK/TIE2. Interacts with SVEP1/polydom. Interacts with THBD; this interaction significantly inhibits the generation of activated PC and TAFIa/CPB2 by the thrombin/thrombomodulin complex.

The protein localises to the secreted. In terms of biological role, binds and activates TIE2 receptor by inducing its tyrosine phosphorylation. Implicated in endothelial developmental processes later and distinct from that of VEGF. Appears to play a crucial role in mediating reciprocal interactions between the endothelium and surrounding matrix and mesenchyme. Mediates blood vessel maturation/stability. It may play an important role in the heart early development. The chain is Angiopoietin-1 (ANGPT1) from Canis lupus familiaris (Dog).